A 376-amino-acid chain; its full sequence is Beta-centractin (376 aa).

Residue M1 is modified to N-acetylmethionine. Residue Y4 is modified to 3'-nitrotyrosine.

The protein belongs to the actin family. ARP1 subfamily.

The protein resides in the cytoplasm. Its subcellular location is the cytoskeleton. It localises to the microtubule organizing center. The protein localises to the centrosome. Its function is as follows. Component of a multi-subunit complex involved in microtubule based vesicle motility. It is associated with the centrosome. The polypeptide is Beta-centractin (ACTR1B) (Homo sapiens (Human)).